The sequence spans 885 residues: Alanine--tRNA ligase (885 aa).

Zn(2+)-binding residues include histidine 564, histidine 568, cysteine 676, and histidine 680.

This sequence belongs to the class-II aminoacyl-tRNA synthetase family. It depends on Zn(2+) as a cofactor.

It localises to the cytoplasm. The enzyme catalyses tRNA(Ala) + L-alanine + ATP = L-alanyl-tRNA(Ala) + AMP + diphosphate. Catalyzes the attachment of alanine to tRNA(Ala) in a two-step reaction: alanine is first activated by ATP to form Ala-AMP and then transferred to the acceptor end of tRNA(Ala). Also edits incorrectly charged Ser-tRNA(Ala) and Gly-tRNA(Ala) via its editing domain. The polypeptide is Alanine--tRNA ligase (Brucella anthropi (strain ATCC 49188 / DSM 6882 / CCUG 24695 / JCM 21032 / LMG 3331 / NBRC 15819 / NCTC 12168 / Alc 37) (Ochrobactrum anthropi)).